The sequence spans 131 residues: Fumarate reductase subunit C (131 aa).

2 helical membrane passes run 60–80 (FVGFLQNPVVLILNLIVLAAA) and 110–130 (IKGLWAVTAVVTAVVLFVALF).

Belongs to the FrdC family. In terms of assembly, part of an enzyme complex containing four subunits: a flavoprotein (FrdA), an iron-sulfur protein (FrdB), and two hydrophobic anchor proteins (FrdC and FrdD).

Its subcellular location is the cell inner membrane. Functionally, two distinct, membrane-bound, FAD-containing enzymes are responsible for the catalysis of fumarate and succinate interconversion; fumarate reductase is used in anaerobic growth, and succinate dehydrogenase is used in aerobic growth. Anchors the catalytic components of the fumarate reductase complex to the cell inner membrane, binds quinones. This Enterobacter sp. (strain 638) protein is Fumarate reductase subunit C.